Here is a 493-residue protein sequence, read N- to C-terminus: Cobyric acid synthase (493 aa).

The 168-residue stretch at 260–427 (RLSVAAIRLP…RHGYLQDDPA (168 aa)) folds into the GATase cobBQ-type domain. Histidine 419 is a catalytic residue.

The protein belongs to the CobB/CobQ family. CobQ subfamily.

Its pathway is cofactor biosynthesis; adenosylcobalamin biosynthesis. In terms of biological role, catalyzes amidations at positions B, D, E, and G on adenosylcobyrinic A,C-diamide. NH(2) groups are provided by glutamine, and one molecule of ATP is hydrogenolyzed for each amidation. In Corynebacterium efficiens (strain DSM 44549 / YS-314 / AJ 12310 / JCM 11189 / NBRC 100395), this protein is Cobyric acid synthase.